Consider the following 353-residue polypeptide: MTTTQDWIMIGGYGPESYNQQSSYQRALLEAAKDKMTEAISANLDLDLISNRFIVADFGCASGPNTFVAVQNIIDAVEEKYLRETGQNPEDNIEFQVLFNDLRINDFNTLFQTLPPGRRYFSAGVPGSFFNRVLPKQSFHIAVMSYAFLFTSKIPKGIMDRDSPLWNKDMQCTGFNPAVKKAYLEQYSIDTKNLLDARAEELMPGGLMLLLGSCMRDGVKMSETLKGTVMDFIGESLNDLAQKGVTEQEKVDTFKTSIYFAEQGEIRQIIEENGKFTIEAFEDIIHSKNEFPLDPKTLAISFKALYGAFISAHFGIEVMRKAFELVEVKAREQISRLHKVKPGMQYLIVLRKN.

S-adenosyl-L-methionine is bound at residue Tyr-18. Substrate-binding positions include Tyr-18 and 21–25 (QSSYQ). S-adenosyl-L-methionine contacts are provided by residues Gly-59, 59–60 (GC), Asn-65, 99–102 (FNDL), 128–130 (SFF), and 145–147 (SYA). 146–150 (YAFLF) provides a ligand contact to substrate. Residues Asn-167, Asp-252, and Phe-254 each contribute to the Mg(2+) site. 2 residues coordinate substrate: Ser-301 and Tyr-306.

Belongs to the methyltransferase superfamily. SABATH family. In terms of assembly, homodimer. Requires Mg(2+) as cofactor.

This chain is Paraxanthine methyltransferase 2, found in Arabidopsis thaliana (Mouse-ear cress).